The following is a 208-amino-acid chain: Major capsid protein (208 aa).

Residues Met1–Gln16 show a composition bias toward low complexity. The disordered stretch occupies residues Met1–Ser69. Basic residues-rich tracts occupy residues Pro17–Asn30 and Pro44–Gly61.

This sequence belongs to the luteoviruses capsid protein family.

It is found in the virion. Major capsid protein that self-assembles to form an icosahedral capsid with a T=3 symmetry, about 23 nm in diameter, and consisting of 180 capsid proteins monomers. Most of the 180 monomers are the major capsid protein, but a small percentage contain the minor capsid protein, which has a long C-terminal extension. The polypeptide is Major capsid protein (Solanum tuberosum (Potato)).